Reading from the N-terminus, the 93-residue chain is MSRSLKKGPFVADHLLKKIEKLNIKGIQKVIVTWSRSSTIVPIMIGHTVAVHNGREHIPVFITDKMVGHKLGEFALTRTFKTHTKKVNKKTKR.

It belongs to the universal ribosomal protein uS19 family.

The protein resides in the plastid. Its subcellular location is the chloroplast. Its function is as follows. Protein S19 forms a complex with S13 that binds strongly to the 16S ribosomal RNA. The protein is Small ribosomal subunit protein uS19c of Stigeoclonium helveticum (Green alga).